Here is a 532-residue protein sequence, read N- to C-terminus: Polyadenylation factor subunit 2 (532 aa).

Positions 50–72 (AGYQPRQQPQGEEDRRPAHRRTV) are disordered. Residues 61–72 (EEDRRPAHRRTV) show a composition bias toward basic and acidic residues. 7 WD repeats span residues 143 to 182 (KVRH…FESI), 185 to 224 (AHES…VNVI), 227 to 266 (AHRE…NAES), 270 to 309 (GHGW…NVNT), 312 to 353 (GFKN…SGSS), 376 to 416 (GHDS…AGGA), and 432 to 471 (AHDY…DPTS). Positions 513–532 (NTAQPEVTDDEPVSIPGFAR) are disordered.

The protein localises to the nucleus. Functionally, required for 3'-end cleavage and polyadenylation of pre-mRNAs. Also involved in chromosome segregation where it has a role in chromosome attachment to the mitotic spindle. The sequence is that of Polyadenylation factor subunit 2 (PFS2) from Yarrowia lipolytica (strain CLIB 122 / E 150) (Yeast).